Reading from the N-terminus, the 430-residue chain is Serine--tRNA ligase (430 aa).

231–233 (TSE) lines the L-serine pocket. 262 to 264 (RSE) contacts ATP. Glu285 is a binding site for L-serine. Residue 349 to 352 (EISS) participates in ATP binding. Ser385 serves as a coordination point for L-serine.

The protein belongs to the class-II aminoacyl-tRNA synthetase family. Type-1 seryl-tRNA synthetase subfamily. In terms of assembly, homodimer. The tRNA molecule binds across the dimer.

Its subcellular location is the cytoplasm. The enzyme catalyses tRNA(Ser) + L-serine + ATP = L-seryl-tRNA(Ser) + AMP + diphosphate + H(+). The catalysed reaction is tRNA(Sec) + L-serine + ATP = L-seryl-tRNA(Sec) + AMP + diphosphate + H(+). Its pathway is aminoacyl-tRNA biosynthesis; selenocysteinyl-tRNA(Sec) biosynthesis; L-seryl-tRNA(Sec) from L-serine and tRNA(Sec): step 1/1. Its function is as follows. Catalyzes the attachment of serine to tRNA(Ser). Is also able to aminoacylate tRNA(Sec) with serine, to form the misacylated tRNA L-seryl-tRNA(Sec), which will be further converted into selenocysteinyl-tRNA(Sec). The sequence is that of Serine--tRNA ligase from Jannaschia sp. (strain CCS1).